Reading from the N-terminus, the 173-residue chain is MNLDQLEVSHDADSLCVVIEISKHSNIKYELDKESGALMVDRVLYGAQNYPANYGFVPNTLGSDGDPVDALVLSDVAFQAGSVVKARLVGVLNMEDESGMDEKLLALPIDKIDPTHSYVKDIDDLSKHTLDKIKHFFETYKDLEPNKWVKVKGFENKESAIKVLEKAIKAYQG.

Substrate contacts are provided by lysine 28, arginine 42, and tyrosine 54. The Mg(2+) site is built by aspartate 64, aspartate 69, and aspartate 101. Position 140 (tyrosine 140) interacts with substrate.

The protein belongs to the PPase family. Homohexamer. Mg(2+) is required as a cofactor.

It is found in the cytoplasm. The catalysed reaction is diphosphate + H2O = 2 phosphate + H(+). Catalyzes the hydrolysis of inorganic pyrophosphate (PPi) forming two phosphate ions. The protein is Inorganic pyrophosphatase of Helicobacter pylori (strain J99 / ATCC 700824) (Campylobacter pylori J99).